Here is a 492-residue protein sequence, read N- to C-terminus: Transcript termination protein A18 (492 aa).

Residues 100-256 (MIELKRPLYI…NSIINIAKLS (157 aa)) form the Helicase ATP-binding domain. 113 to 120 (LACGFGKT) is a binding site for ATP. The DESH box motif lies at 206 to 209 (DESH).

Belongs to the helicase family. Poxviruses subfamily. In terms of assembly, interacts with G2. Might be part of a transcription complex composed at least of G2, A18, and H5.

It localises to the virion. Its function is as follows. DNA helicase which seems to act as a postreplicative transcription termination factor. Involved in ATP-dependent release of nascent RNA. Forms a stable complex with single-stranded DNA, and to a lesser extent RNA. The polypeptide is Transcript termination protein A18 (Bos taurus (Bovine)).